Here is a 234-residue protein sequence, read N- to C-terminus: Purine nucleoside phosphorylase DeoD-type (234 aa).

His4 is an a purine D-ribonucleoside binding site. Residues Gly20, Arg24, Arg43, and 87-90 (RVGT) each bind phosphate. A purine D-ribonucleoside contacts are provided by residues Glu162, 178-180 (EME), and 202-203 (SD). Asp203 acts as the Proton donor in catalysis.

The protein belongs to the PNP/UDP phosphorylase family. Homohexamer; trimer of homodimers.

It carries out the reaction a purine D-ribonucleoside + phosphate = a purine nucleobase + alpha-D-ribose 1-phosphate. The enzyme catalyses a purine 2'-deoxy-D-ribonucleoside + phosphate = a purine nucleobase + 2-deoxy-alpha-D-ribose 1-phosphate. Catalyzes the reversible phosphorolytic breakdown of the N-glycosidic bond in the beta-(deoxy)ribonucleoside molecules, with the formation of the corresponding free purine bases and pentose-1-phosphate. The polypeptide is Purine nucleoside phosphorylase DeoD-type (Anoxybacillus flavithermus (strain DSM 21510 / WK1)).